The sequence spans 296 residues: Elongation factor Ts (296 aa).

Residues 82–85 (TDFV) are involved in Mg(2+) ion dislocation from EF-Tu.

This sequence belongs to the EF-Ts family.

The protein resides in the cytoplasm. Its function is as follows. Associates with the EF-Tu.GDP complex and induces the exchange of GDP to GTP. It remains bound to the aminoacyl-tRNA.EF-Tu.GTP complex up to the GTP hydrolysis stage on the ribosome. The sequence is that of Elongation factor Ts from Aromatoleum aromaticum (strain DSM 19018 / LMG 30748 / EbN1) (Azoarcus sp. (strain EbN1)).